The sequence spans 429 residues: GTPase Obg (429 aa).

Residues 1 to 158 (MFVDQVKIYV…RNVQLELKVL (158 aa)) form the Obg domain. The interval 124–145 (RGNKRFATPANPAPELSENGEP) is disordered. Positions 159–329 (ADVGLVGFPS…LLLAIADKLE (171 aa)) constitute an OBG-type G domain. Residues 165–172 (GFPSVGKS), 190–194 (FTTIV), 212–215 (DLPG), 282–285 (NKMD), and 310–312 (SAV) contribute to the GTP site. 2 residues coordinate Mg(2+): Ser-172 and Thr-192. The OCT domain maps to 351–429 (KYVAEEPDFE…LLDYEFEFMD (79 aa)).

Belongs to the TRAFAC class OBG-HflX-like GTPase superfamily. OBG GTPase family. As to quaternary structure, monomer. The cofactor is Mg(2+).

The protein localises to the cytoplasm. Its function is as follows. An essential GTPase which binds GTP, GDP and possibly (p)ppGpp with moderate affinity, with high nucleotide exchange rates and a fairly low GTP hydrolysis rate. Plays a role in control of the cell cycle, stress response, ribosome biogenesis and in those bacteria that undergo differentiation, in morphogenesis control. The polypeptide is GTPase Obg (Listeria monocytogenes serotype 4b (strain F2365)).